Consider the following 152-residue polypeptide: Superoxide dismutase [Cu-Zn] (152 aa).

Cu cation contacts are provided by His-45, His-47, and His-62. Residues 61-87 (PHFNPAGKEHGAPEDENRHAGDLGNAT) form a disordered region. Zn(2+) contacts are provided by His-62, His-70, His-79, and Asp-82. The segment covering 67 to 81 (GKEHGAPEDENRHAG) has biased composition (basic and acidic residues). Residue His-119 participates in Cu cation binding.

This sequence belongs to the Cu-Zn superoxide dismutase family. Homodimer. Cu cation is required as a cofactor. Zn(2+) serves as cofactor.

It localises to the cytoplasm. The catalysed reaction is 2 superoxide + 2 H(+) = H2O2 + O2. Destroys radicals which are normally produced within the cells and which are toxic to biological systems. The sequence is that of Superoxide dismutase [Cu-Zn] from Zingiber officinale (Ginger).